The sequence spans 454 residues: Anthocyanidin 3-O-galactosyltransferase 3GT6 (454 aa).

A signal peptide spans 1–21 (MTNSSKGRHVAVLPFPFSTHA). The an anthocyanidin site is built by S18 and H20. The active-site Proton acceptor is the H20. Catalysis depends on D117, which acts as the Charge relay. H148 lines the an anthocyanidin pocket. UDP-alpha-D-glucose is bound by residues A331, Q333, H348, W351, N352, S353, and E356. G371 contributes to the an anthocyanidin binding site. D372 is a binding site for UDP-alpha-D-glucose. N441 carries an N-linked (GlcNAc...) asparagine glycan.

It belongs to the UDP-glycosyltransferase family. As to quaternary structure, monomer. As to expression, mostly expressed in leaves and flowers and, to a lower extent, in roots. In flowers, mainly observed in petals, stamens and scapes, and at lower levels in pistils and toruses.

The catalysed reaction is cyanidin + UDP-alpha-D-galactose = cyanidin 3-O-beta-D-galactoside + UDP + H(+). It catalyses the reaction cyanidin + UDP-alpha-D-glucose = cyanidin 3-O-beta-D-glucoside + UDP + H(+). It carries out the reaction delphinidin + UDP-alpha-D-glucose = delphinidin 3-O-beta-D-glucoside + UDP. The enzyme catalyses peonidin + UDP-alpha-D-glucose = peonidin 3-O-beta-D-glucoside + UDP. The catalysed reaction is pelargonidin + UDP-alpha-D-glucose = pelargonidin 3-O-beta-D-glucoside + UDP. It catalyses the reaction delphinidin + UDP-alpha-D-galactose = delphinidin 3-O-beta-D-galactoside + UDP + H(+). It carries out the reaction pelargonidin + UDP-alpha-D-galactose = pelargonidin 3-O-beta-D-galactoside betaine + UDP. The enzyme catalyses peonidin + UDP-alpha-D-galactose = peonidin 3-O-beta-D-galactoside + UDP. The catalysed reaction is petunidin + UDP-alpha-D-galactose = petunidin 3-O-beta-D-galactoside + UDP. It catalyses the reaction petunidin + UDP-alpha-D-glucose = petunidin 3-O-beta-D-glucoside + UDP. It carries out the reaction an anthocyanidin + UDP-alpha-D-glucose + H(+) = an anthocyanidin 3-O-beta-D-glucoside + UDP. The enzyme catalyses an anthocyanidin + UDP-alpha-D-galactose = an anthocyanidin 3-O-beta-D-galactoside + UDP. It participates in pigment biosynthesis; anthocyanin biosynthesis. Its function is as follows. Flavonoid 3-O-glycosyltransferase involved in the biosynthesis of anthocyanins conferring flower red/pink colors, mainly anthocyanidin 3-O-glycosides. Catalyzes the addition of UDP-sugar to the 3-OH of anthocyanidin, with a preference for UDP-galactose (UDP-Gal) as sugar donor and cyanidin as substrate; able to use delphinidin, pelargonidin, peonidin and petunidin as substrates in the presence of UDP-Gal, but barely active on malvidin. Can also use UDP-glucose (UDP-Glu) as sugar donor with cyanidin, delphinidin, pelargonidin, peonidin and petunidin as substrates, but not active on malvidin. The polypeptide is Anthocyanidin 3-O-galactosyltransferase 3GT6 (Rhododendron delavayi (Rhododendron)).